Here is a 595-residue protein sequence, read N- to C-terminus: 73 kDa paraflagellar rod protein (595 aa).

The disordered stretch occupies residues 294–317 (DAEATKRHAANKEKSDRYIRENED). Residues 317-337 (DRQEETWNKIQDLERQLQKLG) form a calmodulin-binding region.

Heterodimer of a 69 kDa and a 73 kDa protein.

It is found in the cell projection. The protein localises to the cilium. Its subcellular location is the flagellum. The protein resides in the cytoplasm. It localises to the cytoskeleton. Functionally, major component of the paraflagellar rod (PFR). The PFR is a highly ordered lattices of fibrous proteins that are located inside the flagellum and assume a fixed orientation with respect to the microtubular axoneme. The polypeptide is 73 kDa paraflagellar rod protein (PFRC) (Trypanosoma brucei brucei).